The following is a 411-amino-acid chain: Citrate synthase (411 aa).

Active-site residues include His304 and Asp363.

It belongs to the citrate synthase family.

It carries out the reaction oxaloacetate + acetyl-CoA + H2O = citrate + CoA + H(+). It participates in carbohydrate metabolism; tricarboxylic acid cycle; isocitrate from oxaloacetate: step 1/2. This Rickettsia massiliae protein is Citrate synthase (gltA).